Reading from the N-terminus, the 119-residue chain is MARVKGSVATRKRRKRILKLAKGYYGAKHRLFKTAKEQVMNSYYYAFRDRRQKKRDFRKLWIARINAAARMNGLSYSKLMHGLKLADIEVNRKMLADIAIADAAAFTALAEEAKKALAK.

The protein belongs to the bacterial ribosomal protein bL20 family.

Its function is as follows. Binds directly to 23S ribosomal RNA and is necessary for the in vitro assembly process of the 50S ribosomal subunit. It is not involved in the protein synthesizing functions of that subunit. This Lactococcus lactis subsp. cremoris (strain MG1363) protein is Large ribosomal subunit protein bL20.